A 476-amino-acid chain; its full sequence is Bifunctional protein HldE (476 aa).

A ribokinase region spans residues 1–319 (MKVSLPAFEK…EALALHHGES (319 aa)). ATP is bound at residue 195–198 (NMSE). Aspartate 264 is a catalytic residue. The cytidylyltransferase stretch occupies residues 345–476 (MTNGCFDILH…AIIQNIMANQ (132 aa)).

It in the N-terminal section; belongs to the carbohydrate kinase PfkB family. This sequence in the C-terminal section; belongs to the cytidylyltransferase family. In terms of assembly, homodimer.

The enzyme catalyses D-glycero-beta-D-manno-heptose 7-phosphate + ATP = D-glycero-beta-D-manno-heptose 1,7-bisphosphate + ADP + H(+). It carries out the reaction D-glycero-beta-D-manno-heptose 1-phosphate + ATP + H(+) = ADP-D-glycero-beta-D-manno-heptose + diphosphate. Its pathway is nucleotide-sugar biosynthesis; ADP-L-glycero-beta-D-manno-heptose biosynthesis; ADP-L-glycero-beta-D-manno-heptose from D-glycero-beta-D-manno-heptose 7-phosphate: step 1/4. The protein operates within nucleotide-sugar biosynthesis; ADP-L-glycero-beta-D-manno-heptose biosynthesis; ADP-L-glycero-beta-D-manno-heptose from D-glycero-beta-D-manno-heptose 7-phosphate: step 3/4. Functionally, catalyzes the phosphorylation of D-glycero-D-manno-heptose 7-phosphate at the C-1 position to selectively form D-glycero-beta-D-manno-heptose-1,7-bisphosphate. Catalyzes the ADP transfer from ATP to D-glycero-beta-D-manno-heptose 1-phosphate, yielding ADP-D-glycero-beta-D-manno-heptose. This is Bifunctional protein HldE from Shewanella sp. (strain W3-18-1).